The primary structure comprises 321 residues: Nucleotide-binding protein LI0459 (321 aa).

41 to 48 provides a ligand contact to ATP; the sequence is GMSGAGKS.

It belongs to the RapZ-like family.

Displays ATPase and GTPase activities. In Lawsonia intracellularis (strain PHE/MN1-00), this protein is Nucleotide-binding protein LI0459.